A 375-amino-acid chain; its full sequence is Paralyzed arrest at two-fold protein 6 (375 aa).

The tract at residues 1–51 (MSTLGRSKTPSRDEPKKPGVFEKLSGTLSRKKKAPEDEHGNQGGAHHATDE) is disordered. Positions 10–20 (PSRDEPKKPGV) are enriched in basic and acidic residues. 2 consecutive Calponin-homology (CH) domains span residues 99 to 206 (AQVV…LHYR) and 266 to 373 (AHVK…TKYK).

This sequence belongs to the parvin family. As to quaternary structure, may interact (via calponin-homology (CH) 2 domain) with pat-4 (via kinase domain). May form a complex with unc-112 and pat-4. Component of an integrin containing attachment complex, composed of at least pat-2, pat-3, pat-4, pat-6, unc-52, unc-97 and unc-112. As to expression, expressed from 1.5 stage embryos, mostly within the muscle cells. In adult hermaphrodites, expressed in the attachments of other muscles, including the uterine, anal depressor, anal sphincter, and vulval muscles, as well as in the spermatheca and the distal tip cells. Expressed in mechanosensory receptor neurons ALML/R, PLML/R, AVM, and PVM. Localizes at body wall muscle attachments.

The protein resides in the cytoplasm. It localises to the cytoskeleton. The protein localises to the myofibril. It is found in the sarcomere. Its subcellular location is the m line. The protein resides in the perikaryon. It localises to the cell projection. The protein localises to the axon. Its function is as follows. Involved in the regulation of cell adhesion and cytoskeleton organization. Component of an integrin containing attachment complex, which is required for muscle development and maintenance. During embryonic development, required to recruit cpna-1, unc-89 and myofilaments to newly forming integrin attachments composed of integrins pat-2/pat-3, pat-4 and unc-112. Also required to reposition the integrin-based attachments so that they form the highly ordered array of dense body and M-line attachments that are characteristic of mature muscle cells. During the formation of neuromuscular junctions at the larval stage, negatively regulates membrane protrusion from body wall muscles. The sequence is that of Paralyzed arrest at two-fold protein 6 from Caenorhabditis elegans.